The chain runs to 159 residues: Transcription elongation factor GreA (159 aa).

The protein belongs to the GreA/GreB family.

Its function is as follows. Necessary for efficient RNA polymerase transcription elongation past template-encoded arresting sites. The arresting sites in DNA have the property of trapping a certain fraction of elongating RNA polymerases that pass through, resulting in locked ternary complexes. Cleavage of the nascent transcript by cleavage factors such as GreA or GreB allows the resumption of elongation from the new 3'terminus. GreA releases sequences of 2 to 3 nucleotides. The sequence is that of Transcription elongation factor GreA from Orientia tsutsugamushi (strain Ikeda) (Rickettsia tsutsugamushi).